Here is a 269-residue protein sequence, read N- to C-terminus: MAPLRILISNDDGVFADGIRTLAAAAAARGHEVTVVCPDQERSATGHGLTLQSPIRAERADELFAPGVTAWACSGTPADCMKLALFELVKHKPDLVLSGINHGPNLGTDVFCSGTVAAAMEGTLEGIRSLAVSSACFQWRQFQAAADLAMDVSEQAIHGNWPENMLLNLNIPPCAKEVMGPLRWTRLSIRRYDEQFSSRKDPRGRAYYWLAGEVVNDLESAGEGPKDWPSDVAQIHKNCPSLTPIQPDLFWRGPLGDLPQLKLNDQSVH.

Residues D11, D12, S43, and N101 each contribute to the a divalent metal cation site.

Belongs to the SurE nucleotidase family. It depends on a divalent metal cation as a cofactor.

The protein localises to the cytoplasm. The catalysed reaction is a ribonucleoside 5'-phosphate + H2O = a ribonucleoside + phosphate. Nucleotidase that shows phosphatase activity on nucleoside 5'-monophosphates. This chain is 5'-nucleotidase SurE, found in Synechococcus sp. (strain CC9902).